The sequence spans 193 residues: Acyl carrier protein phosphodiesterase (193 aa).

It belongs to the AcpH family.

The catalysed reaction is holo-[ACP] + H2O = apo-[ACP] + (R)-4'-phosphopantetheine + H(+). Functionally, converts holo-ACP to apo-ACP by hydrolytic cleavage of the phosphopantetheine prosthetic group from ACP. In Shigella boydii serotype 4 (strain Sb227), this protein is Acyl carrier protein phosphodiesterase.